Consider the following 620-residue polypeptide: Sodium-dependent dopamine transporter (620 aa).

Over 1–56 (MSKSKCSVGLMSSVVAPAKEPNAVGPKEVELILVKEQNGVQLTSSTLTNPRQSPVE) the chain is Cytoplasmic. The chain crosses the membrane as a discontinuously helical span at residues 57 to 95 (AQDRETWGKKIDFLLSVIGFAVDLANVWRFPYLCYKNGG). 5 residues coordinate Na(+): glycine 75, alanine 77, valine 78, aspartate 79, and asparagine 82. Residue aspartate 79 participates in dopamine binding. 2 helical membrane passes run 96–127 (GAFL…NREG) and 128–171 (AAGV…FSSF). Positions 149 and 153 each coordinate dopamine. The Extracellular portion of the chain corresponds to 172–236 (TTELPWIHCN…SHGIDDLGPP (65 aa)). Residues cysteine 180 and cysteine 189 are joined by a disulfide bond. N-linked (GlcNAc...) asparagine glycosylation is found at asparagine 181, asparagine 188, and asparagine 205. Helical transmembrane passes span 237–256 (RWQL…FSLW) and 257–287 (KGVK…GVTL). Topologically, residues 288–306 (PGAIDGIRAYLSVDFYRLC) are extracellular. A discontinuously helical transmembrane segment spans residues 307–335 (EASVWIDAATQVCFSLGVGFGVLIAFSSY). Chloride is bound at residue glutamine 317. Phenylalanine 320 contributes to the dopamine binding site. Positions 321 and 353 each coordinate Na(+). Serine 321 contacts chloride. The chain crosses the membrane as a helical span at residues 336–376 (NKFTNNCYRDAIVTTSINSLTSFSSGFVVFSFLGYMAQKHS). Serine 357 provides a ligand contact to chloride. The Extracellular portion of the chain corresponds to 377 to 400 (VPIGDVAKDGPGLIFIIYPEAIAT). A run of 3 helical transmembrane segments spans residues 401-442 (LPLS…QLLH), 443-466 (RHRE…CVTN), and 467-499 (GGIY…AWFY). 3 residues coordinate Na(+): leucine 418, aspartate 421, and serine 422. 2 residues coordinate dopamine: serine 422 and alanine 423. The Cytoplasmic segment spans residues 500–516 (GVGQFSDDIQQMTGQRP). A helical transmembrane segment spans residues 517–542 (SLYWRLCWKLVSPCFLLFVVVVSIVT). The Extracellular portion of the chain corresponds to 543–553 (FRPPHYGAYIF). The chain crosses the membrane as a helical span at residues 554 to 583 (PDWANALGWVIATSSMAMVPIYAAYKFCSL). The segment at 561–590 (GWVIATSSMAMVPIYAAYKFCSLPGSFREK) is interaction with TGFB1I1. Residues 584 to 620 (PGSFREKLAYAIAPEKDRELVDRGEVRQFTLRHWLKV) are Cytoplasmic-facing.

It belongs to the sodium:neurotransmitter symporter (SNF) (TC 2.A.22) family. SLC6A3 subfamily. As to quaternary structure, monomer. Homooligomer; disulfide-linked. Interacts with PRKCABP and TGFB1I1. Interacts (via N-terminus) with SYNGR3 (via N-terminus). Interacts with SLC18A2. Interacts with TOR1A (ATP-bound); TOR1A regulates SLC6A3 subcellular location. Interacts with alpha-synuclein/SNCA. Interacts with SEPTIN4. In terms of tissue distribution, highly expressed in substantia nigra. Expressed in axonal varicosities in dopaminergic nerve terminals (at protein level). Expressed in the striatum (at protein level).

The protein resides in the cell membrane. The protein localises to the cell projection. It localises to the neuron projection. It is found in the axon. It catalyses the reaction dopamine(out) + chloride(out) + Na(+)(out) = dopamine(in) + chloride(in) + Na(+)(in). The catalysed reaction is dopamine(out) + chloride(out) + 2 Na(+)(out) = dopamine(in) + chloride(in) + 2 Na(+)(in). The enzyme catalyses (R)-noradrenaline(out) + chloride(out) + Na(+)(out) = (R)-noradrenaline(in) + chloride(in) + Na(+)(in). Inhibited by cocaine, which occupies the same binding site as dopamine. Inhibited by zinc ions. Enhanced by the antibiotic valinomycin. Inhibited by benztropine. Inhibited by GBR 12909 dihydrochloride and amphetamine. Inhibited by mazindol, GBR 12783 dihydrochloride, nomifensine, diclofensine, amfonelic acid, Lu 19005, Win-35428, bupropion and ritalin. Functionally, mediates sodium- and chloride-dependent transport of dopamine. Also mediates sodium- and chloride-dependent transport of norepinephrine (also known as noradrenaline). Regulator of light-dependent retinal hyaloid vessel regression, downstream of OPN5 signaling. This is Sodium-dependent dopamine transporter (SLC6A3) from Homo sapiens (Human).